The following is a 423-amino-acid chain: Carboxypeptidase B2 (423 aa).

The first 22 residues, 1 to 22 (MKLCSLAVLVPIVLFCEQHVFA), serve as a signal peptide directing secretion. A propeptide spans 23 to 114 (FQSGQVLAAL…QISNDTVSPR (92 aa)) (activation peptide). N-linked (GlcNAc...) asparagine glycans are attached at residues asparagine 44, asparagine 73, and asparagine 85. An N-linked (GlcNAc...) (complex) asparagine glycan is attached at asparagine 108. Residues 122–419 (QYHSLNEIYS…AAVSKIAWHV (298 aa)) enclose the Peptidase M14 domain. An intrachain disulfide couples cysteine 178 to cysteine 191. Positions 181 and 184 each coordinate Zn(2+). Residues 181-184 (HARE) and arginine 239 contribute to the substrate site. An N-linked (GlcNAc...) asparagine; partial glycan is attached at asparagine 241. 2 disulfide bridges follow: cysteine 250-cysteine 274 and cysteine 265-cysteine 279. Residue 256–257 (NR) participates in substrate binding. Histidine 310 lines the Zn(2+) pocket. Substrate is bound by residues 311–312 (SY) and tyrosine 363. Glutamate 385 acts as the Proton donor/acceptor in catalysis.

This sequence belongs to the peptidase M14 family. The cofactor is Zn(2+). Post-translationally, N-glycosylated. N-glycan at Asn-108: Hex5HexNAc4. Plasma; synthesized in the liver.

Its subcellular location is the secreted. The catalysed reaction is Release of C-terminal Arg and Lys from a polypeptide.. With respect to regulation, TAFI/CPB2 is unique among carboxypeptidases in that it spontaneously inactivates with a short half-life, a property that is crucial for its role in controlling blood clot lysis. The zymogen is stabilized by interactions with the activation peptide. Release of the activation peptide increases a dynamic flap mobility and in time this leads to conformational changes that disrupt the catalytic site and expose a cryptic thrombin-cleavage site present at Arg-324. Cleaves C-terminal arginine or lysine residues from biologically active peptides such as kinins or anaphylatoxins in the circulation thereby regulating their activities. Down-regulates fibrinolysis by removing C-terminal lysine residues from fibrin that has already been partially degraded by plasmin. The polypeptide is Carboxypeptidase B2 (CPB2) (Homo sapiens (Human)).